The primary structure comprises 471 residues: MERGEEAPTEGAPPEGALVEAKAPVIPEAPATDVSTTEEAGSKEPQVPSGPRPEGAGDTCDTRGARGPPTPGRAKSQKTPRQGTARCQTLESAMRSMSVRLECHDVEEQFILRLPPEQAYAVRKIIHSRNAAWKDKLKIDFSPDGHHAVVQVDNVSLPAKLVNLPCVIGSLKTIDRKTFYKTADVSQMLVCSPEGEPHSPPEEPVVSTGPTVIGISEGKAERKKYNWKHGITPPLKNVRKKRFRKTTKKLPDVKQVDEINFSEYTQSPSVEKEVKRLLYSDAEAVSVRWEVVDDDDAKEIESQGSMPTTPGISQMGGASLSDYDVFREMMGDSGSNSNDVEEKSNEGDDDDDEDEDDEDYGNEKEEEETDNSEEELEKELQAKFNEFSLHEADQDYSSITMAIQKLIFIKEKRLQMIYKKAQRQKELLRKVENLTLKRHFQNVLGKLNIMEKEKCEQIYHLQEQLKCFLKE.

3 disordered regions span residues 1 to 84, 192 to 211, and 328 to 377; these read MERG…RQGT, SPEG…TGPT, and EMMG…EELE. Serine 199 is subject to Phosphoserine. The segment covering 347-377 has biased composition (acidic residues); sequence GDDDDDEDEDDEDYGNEKEEEETDNSEEELE. Residues 358–433 adopt a coiled-coil conformation; sequence EDYGNEKEEE…QKELLRKVEN (76 aa).

This sequence belongs to the TAF7 family. In terms of assembly, TFIID is composed of TATA binding protein (TBP) and a number of TBP-associated factors (TAFs). TAF7L may replace TAF7 in a spermatogenesis-specific form of TFIID. Interacts with TBP; the interaction occurs in a sub-population of cells (pachytene and haploid round spermatids) and is developmentally regulated through differential intracellular localization of the two proteins. Interacts with TAF1. Testis-specific (at protein level). Expressed during spermatogenesis from spermatogonia stage up to the stage of round spermatids.

The protein localises to the nucleus. It is found in the cytoplasm. Its function is as follows. Probably functions as a spermatogenesis-specific component of the DNA-binding general transcription factor complex TFIID, a multimeric protein complex that plays a central role in mediating promoter responses to various activators and repressors. May play a role in spermatogenesis. The protein is Transcription initiation factor TFIID subunit 7-like (Taf7l) of Mus musculus (Mouse).